The sequence spans 618 residues: 1-deoxy-D-xylulose-5-phosphate synthase (618 aa).

Thiamine diphosphate-binding positions include His77 and 118-120; that span reads GHS. Asp149 serves as a coordination point for Mg(2+). Residues 150–151, Asn178, Tyr285, and Glu367 contribute to the thiamine diphosphate site; that span reads GA. Asn178 contacts Mg(2+).

It belongs to the transketolase family. DXPS subfamily. In terms of assembly, homodimer. Mg(2+) serves as cofactor. Thiamine diphosphate is required as a cofactor.

The catalysed reaction is D-glyceraldehyde 3-phosphate + pyruvate + H(+) = 1-deoxy-D-xylulose 5-phosphate + CO2. The protein operates within metabolic intermediate biosynthesis; 1-deoxy-D-xylulose 5-phosphate biosynthesis; 1-deoxy-D-xylulose 5-phosphate from D-glyceraldehyde 3-phosphate and pyruvate: step 1/1. Its function is as follows. Catalyzes the acyloin condensation reaction between C atoms 2 and 3 of pyruvate and glyceraldehyde 3-phosphate to yield 1-deoxy-D-xylulose-5-phosphate (DXP). This Idiomarina loihiensis (strain ATCC BAA-735 / DSM 15497 / L2-TR) protein is 1-deoxy-D-xylulose-5-phosphate synthase.